Here is a 401-residue protein sequence, read N- to C-terminus: Elongation factor Tu 2 (401 aa).

The tr-type G domain maps to 10–209; the sequence is KPHVNVGTIG…AVDEYIPTPV (200 aa). Residues 19 to 26 form a G1 region; sequence GHVDHGKT. 19–26 lines the GTP pocket; that stretch reads GHVDHGKT. Position 26 (T26) interacts with Mg(2+). The tract at residues 60–64 is G2; sequence GITIA. The G3 stretch occupies residues 81-84; that stretch reads DCPG. Residues 81-85 and 136-139 each bind GTP; these read DCPGH and NKVD. Residues 136 to 139 are G4; it reads NKVD. Positions 174 to 176 are G5; sequence SAL.

The protein belongs to the TRAFAC class translation factor GTPase superfamily. Classic translation factor GTPase family. EF-Tu/EF-1A subfamily. In terms of assembly, monomer.

It localises to the cytoplasm. It catalyses the reaction GTP + H2O = GDP + phosphate + H(+). Functionally, GTP hydrolase that promotes the GTP-dependent binding of aminoacyl-tRNA to the A-site of ribosomes during protein biosynthesis. This chain is Elongation factor Tu 2, found in Roseiflexus castenholzii (strain DSM 13941 / HLO8).